A 337-amino-acid polypeptide reads, in one-letter code: Formamidase (337 aa).

One can recognise a CN hydrolase domain in the interval 14-257 (VVIGLVQLQL…DEIITAEVRP (244 aa)). Glu-60 (proton acceptor) is an active-site residue. Lys-129 acts as the Proton donor in catalysis. The Nucleophile role is filled by Cys-162.

It belongs to the carbon-nitrogen hydrolase superfamily. Aliphatic amidase family.

It catalyses the reaction formamide + H2O = formate + NH4(+). Its function is as follows. Is an aliphatic amidase with a restricted substrate specificity, as it only hydrolyzes formamide. The polypeptide is Formamidase (Bradyrhizobium diazoefficiens (strain JCM 10833 / BCRC 13528 / IAM 13628 / NBRC 14792 / USDA 110)).